The following is a 440-amino-acid chain: Protein CyaD (440 aa).

At 1-55 (MRRALRELAARHGRVLAASWRQRHRRPAGWFDPVETEFLPSALSLQERPISPTAR) the chain is on the cytoplasmic side. The chain crosses the membrane as a helical span at residues 56–75 (WLARILMALAAGALVWSVVG). The Periplasmic segment spans residues 76 to 440 (KTEIVVHAAG…RHAGESLGER (365 aa)).

The protein belongs to the membrane fusion protein (MFP) (TC 8.A.1) family.

Its subcellular location is the cell inner membrane. CyaD is necessary for transport of calmodulin-sensitive adenylate cyclase-hemolysin (cyclolysin). The protein is Protein CyaD (cyaD) of Bordetella pertussis (strain ATCC 9797 / DSM 5571 / CCUG 30873 / LMG 14455 / NCTC 10739 / 18323).